The following is a 441-amino-acid chain: Chromosomal replication initiator protein DnaA (441 aa).

Positions 1–71 (MDIRWEEILE…AVYQVVGDRF (71 aa)) are domain I, interacts with DnaA modulators. The segment at 71 to 99 (FKVSILTESETSSHVLKEVIQSKFDDSDS) is domain II. The interval 100–318 (DLNPEYIFSN…GIVNDLVMYK (219 aa)) is domain III, AAA+ region. ATP contacts are provided by Gly-143, Gly-145, Lys-146, and Thr-147. Residues 319 to 441 (KAYEYFLLTE…HTIKHKISFQ (123 aa)) are domain IV, binds dsDNA.

Belongs to the DnaA family. In terms of assembly, oligomerizes as a right-handed, spiral filament on DNA at oriC.

It is found in the cytoplasm. Its function is as follows. Plays an essential role in the initiation and regulation of chromosomal replication. ATP-DnaA binds to the origin of replication (oriC) to initiate formation of the DNA replication initiation complex once per cell cycle. Binds the DnaA box (a 9 base pair repeat at the origin) and separates the double-stranded (ds)DNA. Forms a right-handed helical filament on oriC DNA; dsDNA binds to the exterior of the filament while single-stranded (ss)DNA is stabiized in the filament's interior. The ATP-DnaA-oriC complex binds and stabilizes one strand of the AT-rich DNA unwinding element (DUE), permitting loading of DNA polymerase. After initiation quickly degrades to an ADP-DnaA complex that is not apt for DNA replication. Binds acidic phospholipids. In Leptospira biflexa serovar Patoc (strain Patoc 1 / Ames), this protein is Chromosomal replication initiator protein DnaA.